A 993-amino-acid polypeptide reads, in one-letter code: MIKSSFKAQPFLVRNTILCPNDKRSFTEYTQVIETVSKNKVFLEQLLLANPKLYDVMQKYNAGLLKKKRVKKLFESIYKYYKRSYLRSTPFGLFSETSIGVFSKSSQYKLMGKTTKGIRLDTQWLIRLVHKMEVDFSKKLSFTRNNANYKFGDRVFQVYTINSSELEEVNIKYTNVYQIISEFCENDYQKYEDICETVTLCYGDEYRELSEQYLGSLIVNHYLISNLQKDLLSDFSWNTFLTKVEAIDEDKKYIIPLKKVQKFIQEYSEIEIGEGIEKLKEIYQEMSQILENDNYIQIDLISDSEINFDVKQKQQLEHLAEFLGNTTKSVRRTYLDDYKDKFIEKYGVDQEVQITELFDSTFGIGAPYNYNHPRNDFYESEPSTLYYSEEEREKYLSMYVEAVKNHNVINLDDLESHYQKMDLEKKSELQGLELFLNLAKEYEKDIFILGDIVGNNNLGGASGRFSALSPELTSYHRTIVDSVERENENKEITSCEIVFLPENIRHANVMHTSIMRRKVLPFFTSTSHNEVLLTNIYIGIDEKEKFYARDISTQEVLKFYITSMYNKTLFSNELRFLYEISLDDKFGNLPWELIYRDFDYIPRLVFDEIVISPAKWKIWGRDVNSKMTIRELIQSKEIPKEFYIVNGDNKVYLSQKNPLDMEILESAIKKSSKRKDFIELQEYFEDENIINKGEKGRVADVVVPFIRTRALGNEGRAFIREKRVSVERREKLPFNEWLYLKLYISINRQNEFLLSYLPDIQKIVANLGGNLFFLRYTDPKPHIRLRIKCSDLFLAYGSILEILKRSRKNRIMSTFDISIYDQEVERYGGFDTLELSEAIFCADSKIIPNLLTLIKDTNNDWKVDDVSILVNYLYLKCFFQNDNKKILNFLNLVSTKKVKENVNEKIEHYLKLLKVNNLGDQIFYDKNFKELKHAIKNLFLKMIAQDFELQKVYSIIDSIIHVHNNRLIGIERDKEKLIYYTLQRLFVSEEYMK.

Residues 838-851 (AIFCADSKIIPNLL) form a helical membrane-spanning segment.

It to B.subtilis SpaB and S.epidermidis EpiB.

Its subcellular location is the cell membrane. Functionally, involved in the post-translational modification of the lantibiotic nisin. The protein is Nisin biosynthesis protein NisB (nisB) of Lactococcus lactis subsp. lactis (Streptococcus lactis).